Here is a 529-residue protein sequence, read N- to C-terminus: DnaJ homolog l(2)tid, mitochondrial (529 aa).

A mitochondrion-targeting transit peptide spans 1–22 (MISCKNLCVLRQLPLKNCRRHY). The residue at position 35 (Arg35) is an Omega-N-methylarginine. Positions 80-145 (DYYATLGVAK…QKRREYDTYG (66 aa)) constitute a J domain. Lys121 bears the N6-acetyllysine mark. The segment at 230-308 (GVNKDVNVNV…CEGKGQTVQR (79 aa)) adopts a CR-type zinc-finger fold. The Zn(2+) site is built by Cys243, Cys246, Cys260, Cys263, Cys282, Cys285, Cys296, and Cys299. A CXXCXGXG motif; approximate repeat occupies 243–250 (CPKCAGSK). The stretch at 260-267 (CQYCNGTG) is one CXXCXGXG motif repeat. The CXXCXGXG motif; approximate repeat unit spans residues 282–289 (CRYCQGTR). The stretch at 296 to 303 (CAECEGKG) is one CXXCXGXG motif repeat. The segment at 441–529 (TPGQIHGMAQ…FLNKIKSMFN (89 aa)) is disordered. The segment covering 497–508 (QSEKSETRRKDQ) has biased composition (basic and acidic residues).

The protein localises to the mitochondrion outer membrane. May act as a tumor suppressor in larval imaginal disks. This chain is DnaJ homolog l(2)tid, mitochondrial (l(2)tid), found in Drosophila virilis (Fruit fly).